Here is a 720-residue protein sequence, read N- to C-terminus: Transcriptional regulator EFH1 (720 aa).

Polar residues-rich tracts occupy residues 1-15 and 22-35; these read MNGI…NFYN and PSSS…SSQD. Disordered regions lie at residues 1–111, 181–223, 245–336, and 365–437; these read MNGI…SSST, SFQM…HQSQ, QKEF…TIAT, and YQRQ…PQPD. Positions 71–105 are enriched in low complexity; the sequence is QQNQSESQQSRQSHHLQQQQQQQQQQQQNQHNQQN. Residues 181–200 are compositionally biased toward polar residues; it reads SFQMGSVSTPDTQNSSIRSK. Residues 201 to 223 show a composition bias toward low complexity; it reads QQQQHSYQQQQPQQLSQSQHQSQ. Polar residues predominate over residues 254-266; it reads GDQTLVPQTNSKL. The span at 267–304 shows a compositional bias: low complexity; the sequence is QQQISETSYSQQQQQQQSPPTPQKQQQQQHYQHQTTQP. A compositionally biased stretch (polar residues) spans 313–336; sequence YSQTGGPSSSPVAGNISIPTTIAT. Positions 366 to 399 are enriched in low complexity; that stretch reads QRQQQQQQQHQQPQSQQMSQISQLSQQIPPQGSS. The segment covering 400 to 413 has biased composition (polar residues); it reads KNISINSTPTKSRA. Residues 414-433 are compositionally biased toward low complexity; that stretch reads SSITTRSGRQSRSTSISSFI. The HTH APSES-type domain maps to 446–552; it reads KVATTRWDDE…KNIKQYFLTK (107 aa). The segment at residues 480–501 is a DNA-binding region (H-T-H motif); it reads GTKLLNVIGMTRGKRDGILKTE. The span at 569–582 shows a compositional bias: basic and acidic residues; it reads GMTRQREEVRREGR. Residues 569 to 662 are disordered; that stretch reads GMTRQREEVR…KNSESKLLET (94 aa). The segment covering 613 to 644 has biased composition (acidic residues); the sequence is VPGDDEEEEDDDDDDDDDEEEGEQDDEEEEDG. Positions 645-654 are enriched in low complexity; sequence SSTSMSSSKN.

This sequence belongs to the EFG1/PHD1/stuA family.

The protein resides in the nucleus. Functionally, transcription factor that regulates filamentous growth through repression of EFG1. Regulates the level of colonizing fungi, favoring commensalism as opposed to candidiasis. This chain is Transcriptional regulator EFH1 (EFH1), found in Candida albicans (strain SC5314 / ATCC MYA-2876) (Yeast).